The chain runs to 187 residues: Large ribosomal subunit protein uL5 (187 aa).

Belongs to the universal ribosomal protein uL5 family. Part of the 50S ribosomal subunit; part of the 5S rRNA/L5/L18/L25 subcomplex. Contacts the 5S rRNA and the P site tRNA. Forms a bridge to the 30S subunit in the 70S ribosome.

In terms of biological role, this is one of the proteins that bind and probably mediate the attachment of the 5S RNA into the large ribosomal subunit, where it forms part of the central protuberance. In the 70S ribosome it contacts protein S13 of the 30S subunit (bridge B1b), connecting the 2 subunits; this bridge is implicated in subunit movement. Contacts the P site tRNA; the 5S rRNA and some of its associated proteins might help stabilize positioning of ribosome-bound tRNAs. This chain is Large ribosomal subunit protein uL5, found in Mycobacterium bovis (strain ATCC BAA-935 / AF2122/97).